The following is a 1244-amino-acid chain: Superkiller complex protein 2 (1244 aa).

Positions leucine 218 to valine 249 are disordered. Residues serine 242 and serine 253 each carry the phosphoserine modification. Residues isoleucine 316–isoleucine 472 enclose the Helicase ATP-binding domain. Residue alanine 329 to threonine 336 participates in ATP binding. A DEVH box motif is present at residues aspartate 420–histidine 423. In terms of domain architecture, Helicase C-terminal spans glycine 582–leucine 752.

It belongs to the helicase family. SKI2 subfamily. As to quaternary structure, component of the SKI complex which consists of SKIC2, SKIC3 and SKIC8. Interacts with HBS1L isoform 2.

It localises to the nucleus. It is found in the cytoplasm. The enzyme catalyses ATP + H2O = ADP + phosphate + H(+). Helicase component of the SKI complex, a multiprotein complex that assists the RNA-degrading exosome during the mRNA decay and quality-control pathways. The SKI complex catalyzes mRNA extraction from 80S ribosomal complexes in the 3'-5' direction and channels mRNA to the cytosolic exosome for degradation. SKI-mediated extraction of mRNA from stalled ribosomes allow binding of the Pelota-HBS1L complex and subsequent ribosome disassembly by ABCE1 for ribosome recycling. In the nucleus, the SKI complex associates with transcriptionally active genes in a manner dependent on PAF1 complex (PAF1C). This is Superkiller complex protein 2 from Mus musculus (Mouse).